The following is a 4691-amino-acid chain: Plectin (4691 aa).

Positions 1–1478 (MVAGMLMPLD…SELTTLTSQY (1478 aa)) are globular 1. At arginine 21 the chain carries Phosphoserine. Valine 26 carries the post-translational modification Phosphotyrosine. Disordered stretches follow at residues 113 to 161 (RSPH…TPVV) and 167 to 186 (GTLARPGPEPAPATDERDRV). The span at 137–154 (DPAREERQVYRRKEREEG) shows a compositional bias: basic and acidic residues. Positions 181–411 (DERDRVQKKT…YVSSLYDAMP (231 aa)) are actin-binding. 2 Calponin-homology (CH) domains span residues 185-293 (RVQK…LHFQ) and 306-411 (MTAK…DAMP). The Spectrin 1 repeat unit spans residues 653 to 727 (LQSTQRRPEL…ERARNDESQL (75 aa)). Serine 728 is modified (phosphoserine). Spectrin repeat units lie at residues 748-832 (KLLN…REDH) and 845-938 (LQTQ…AIVQ). Phosphothreonine is present on threonine 823. Positions 949–1006 (RGHVPLIAVCDYKQVEVTVHKGDQCQLVGPAQPSHWKVLSGSSSEAAVPSVCFLVPPP) constitute an SH3 domain. Residues 963–4572 (VEVTVHKGDQ…ARTAQKLRDV (3610 aa)) form a required for interaction with intermediate filament proteins region. Serine 1055 is modified (phosphoserine). The stretch at 1323-1423 (RERVTQLLER…QKFAKQYINA (101 aa)) is one Spectrin 4 repeat. Residue serine 1443 is modified to Phosphoserine. 2 coiled-coil regions span residues 1477–1697 (QYIK…ERRL) and 1729–2764 (SFAE…TTQA). Residues 1479–2762 (IKFISETLRR…ALAHSEIATT (1284 aa)) form a central fibrous rod domain region. The interval 1626–1653 (RAEEAEAQKRQAQEEAERLRRQVQDESQ) is disordered. Serine 1729 is subject to Phosphoserine. An N6-acetyllysine modification is found at lysine 1733. Disordered stretches follow at residues 1801–1835 (SLAQADAEKQKEEAEREARRRGKAEEQAVRQRELA), 2100–2141 (AEDT…SLAA), and 2223–2317 (RLRS…KHKK). Composition is skewed to basic and acidic residues over residues 1806–1835 (DAEKQKEEAEREARRRGKAEEQAVRQRELA), 2100–2116 (AEDTMRSKEQAELEAAR), 2124–2136 (EEQRRREAEERVQ), and 2223–2266 (RLRS…KQSA). A compositionally biased stretch (low complexity) spans 2267 to 2280 (EEQAQAQAQAQAAA). The span at 2281–2296 (EKLRKEAEQEAARRAQ) shows a compositional bias: basic and acidic residues. A Phosphoserine modification is found at serine 2639. An N6-acetyllysine modification is found at lysine 2644. The disordered stretch occupies residues 2675–2728 (LREEQQRQQQQMEQEKQELMASMEEARRRQREAEEGVRRKQEELQHLEQQRQQQ). The segment covering 2687 to 2728 (EQEKQELMASMEEARRRQREAEEGVRRKQEELQHLEQQRQQQ) has biased composition (basic and acidic residues). Positions 2763-4691 (QAASTKALPN…SLGGPESAVA (1929 aa)) are globular 2. The residue at position 2781 (serine 2781) is a Phosphoserine. Residue tyrosine 2788 is modified to Phosphotyrosine. Plectin repeat units follow at residues 2795–2832 (QKVPAQQLQEAGILSQEELQRLAQGHTTVAELTQREDV), 2833–2870 (YRYLKGRSSIAGLLLKPTNEKLSVYTALQRQLLSPGTA), 2871–2908 (LILLEAQAASGFLLDPVRNRRLTVNEAVKEGVVGPELH), 2909–2946 (HKLLSAERAVTGYKDPYTGEQISLFQAMKKDLIVRDHG), 2947–2984 (VRLLEAQIATGGIIDPVHSHRVPVDVAYKRGYFDEEMN), and 2988–3022 (SDPSDDTKGFFDPNTHENLTYLQLLERCVEDPETG). Serine 2809 carries the phosphoserine modification. Threonine 2893 carries the phosphothreonine modification. The residue at position 3040 (tyrosine 3040) is a Phosphotyrosine. N6-acetyllysine is present on residues lysine 3060 and lysine 3098. Plectin repeat units lie at residues 3123–3160 (ALVPAAELLDSGVISHELYQQLQRGERSVREVAEADSV), 3161–3198 (RQALRGTNVIAGVWLEEAGQKLSIYEALKKDLLQPEVA), 3199–3236 (VALLEAQAGTGHIIDPATSARLTVDEAVRAGLVGPELH), 3237–3274 (EKLLSAEKAVTGYRDPYSGQSVSLFQALKKGLIPREQG), 3275–3312 (LRLLDAQLSTGGIVDPSKSHRVPLDVAYARGYLDKETN), and 3315–3350 (LTSPRDDARVYHDPSTQEPVTYSQLQQRCRSDQLTG). The span at 3312–3326 (NRALTSPRDDARVYH) shows a compositional bias: basic and acidic residues. The interval 3312 to 3338 (NRALTSPRDDARVYHDPSTQEPVTYSQ) is disordered. A compositionally biased stretch (polar residues) spans 3328–3338 (PSTQEPVTYSQ). Position 3369 is a phosphotyrosine (tyrosine 3369). Lysine 3427 carries the N6-acetyllysine modification. Plectin repeat units follow at residues 3492-3529 (RTLLQGSGCLAGIYLEDSKEKVTIYEAMRRGLLRPSTA), 3530-3567 (TLLLEAQAATGFLVDPVRNQRLYVHEAVKAGVVGPELH), 3568-3605 (EKLLSAEKAVTGYKDPYSGNTISLFQAMKKGLVLRDHA), 3606-3643 (IRLLEAQVATGGIIDPVHSHRLPVDVAYQRGYFDEEMN), and 3647-3681 (ADPSDDTKGFFDPNTHENLTYLQLLERCVEDPETG). Phosphothreonine is present on threonine 3792. Tyrosine 3797 is subject to Phosphotyrosine. Plectin repeat units lie at residues 3827 to 3864 (WRYLYGTGAVAGVYLPGSRQTLTIYQALKKGLLSAEVA), 3865 to 3902 (RLLLEAQAATGFLLDPVKGERLTVDEAVRKGLVGPELH), 3903 to 3940 (DRLLSAERAVTGYRDPYTEQTISLFQAMKKELIPAEEA), 3941 to 3978 (LRLLDAQLATGGIVDPRLGFHLPLEVAYQRGYLNKDTH), and 3982 to 4015 (SEPSEVRSYVDPSTDERLSYTQLLKRCRRDDPSG). Residues 3954–4291 (VDPRLGFHLP…KRRVVIVDPE (338 aa)) form a required for interaction with type2 keratins, DES and VIM region. Threonine 4037 is modified (phosphothreonine). A Phosphoserine modification is found at serine 4061. 6 Plectin repeats span residues 4070 to 4107 (QKFLEGTSCIAGVFVDATKERLSVYQAMKKGIIRPGTA), 4108 to 4145 (FELLEAQAATGYVIDPIKGLKLTVEEAVRMGIVGPEFK), 4146 to 4183 (DKLLSAERAVTGYKDPYSGKLISLFQAMKKGLILKDHG), 4184 to 4221 (IRLLEAQIATGGIIDPEESHRLPVEVAYKRGLFDEEMN), 4225 to 4259 (TDPSDDTKGFFDPNTEENLTYLQLMERCITDPQTG), and 4272 to 4312 (RKTS…HQTY). The interval 4257 to 4307 (QTGLCLLPLKEKKRERKTSSKSSVRKRRVVIVDPETGKEMSVYEAYRKGLI) is binding to intermediate filaments. A disordered region spans residues 4387–4420 (FRSRSSSVGSSSSYPISSAGPRTQLASWSDPTEE). Serine 4389, serine 4391, serine 4392, serine 4393, serine 4396, serine 4397, serine 4398, and serine 4399 each carry phosphoserine. Residues 4389-4404 (SRSSSVGSSSSYPISS) show a composition bias toward low complexity. Position 4400 is a phosphotyrosine (tyrosine 4400). Phosphoserine is present on residues serine 4403 and serine 4413. The segment covering 4406–4416 (GPRTQLASWSD) has biased composition (polar residues). Plectin repeat units follow at residues 4415–4452 (SDPTEETGPVAGILDTETLEKVSITEAMHRNLVDNITG), 4453–4490 (QRLLEAQACTGGIIDPSTGERFPVTEAVNKGLVDKIMV), 4491–4528 (DRINLAQKAFCGFEDPRTKTKMSAAQALKKGWLYYEAG), 4529–4566 (QRFLEVQYLTGGLIEPDTPGRVSLDEALQRGTVDARTA), and 4567–4604 (QKLRDVSAYSKYLTCPKTKLKISYKDALDRSMVEEGTG). Position 4418 is a phosphothreonine (threonine 4418). The tract at residues 4503-4572 (FEDPRTKTKM…ARTAQKLRDV (70 aa)) is required for efficient interaction with KRT5 and KRT14 heterodimers. Threonine 4546 bears the Phosphothreonine; by CDK1 mark. 2 positions are modified to phosphoserine: serine 4614 and serine 4620. Residues 4618–4678 (YYSPYSVSGS…SGYGRRYASG (61 aa)) are compositionally biased toward low complexity. Residues 4618–4691 (YYSPYSVSGS…SLGGPESAVA (74 aa)) form a disordered region. Phosphotyrosine is present on tyrosine 4622. Phosphoserine is present on residues serine 4623, serine 4625, and serine 4629. Position 4630 is a phosphothreonine (threonine 4630). The segment at 4632-4647 (GSRTGSRTGSRAGSRR) is 4 X 4 AA tandem repeats of G-S-R-X. Serine 4633 is subject to Phosphoserine. Residues arginine 4634 and arginine 4647 each carry the omega-N-methylarginine modification. Serine 4649 and serine 4682 each carry phosphoserine.

It belongs to the plakin or cytolinker family. As to quaternary structure, homodimer or homotetramer. Interacts (via actin-binding domain) with SYNE3. Interacts (via calponin-homology (CH) 1 domain) with VIM (via rod region). Interacts (via N-terminus) with DST isoform 2 (via N-terminus). Interacts with FER. Interacts with TOR1A. Interacts with ANK3. Identified in complexes that contain VIM, EZR, AHNAK, BFSP1, BFSP2, ANK2, PLEC, PRX and spectrin. In terms of assembly, interacts with KRT14, heterodimers consisting of KRT8 and KRT18, heterodimers consisting of KRT5 and KRT14, heterodimers consisting of KRT14 and KRT15, and heterodimers consisting of KRT1 and KRT10. Interacts with DES and VIM. Phosphorylated by CDK1; regulates dissociation from intermediate filaments during mitosis. Isoform PLEC-1A is phosphorylated on Ser-21. Isoform PLEC-1A is phosphorylated on Tyr-26. In terms of tissue distribution, detected in eye lens fiber cells (at protein level). Expressed at high levels in lung, brain, small intestine, muscle, heart and skin with lower levels found in kidney, liver, uterus, spleen and salivary gland.

It localises to the cytoplasm. It is found in the cytoskeleton. Its subcellular location is the cell junction. The protein resides in the hemidesmosome. The protein localises to the cell projection. It localises to the podosome. Interlinks intermediate filaments with microtubules and microfilaments and anchors intermediate filaments to desmosomes or hemidesmosomes. May be involved not only in the cross-linking and stabilization of cytoskeletal intermediate filaments network, but also in the regulation of their dynamics. The sequence is that of Plectin (Plec) from Mus musculus (Mouse).